The sequence spans 550 residues: Chaperonin GroEL (550 aa).

ATP is bound by residues Thr30–Pro33, Lys51, Asp87–Thr91, Gly415, and Asp495.

Belongs to the chaperonin (HSP60) family. Forms a cylinder of 14 subunits composed of two heptameric rings stacked back-to-back. Interacts with the co-chaperonin GroES.

The protein resides in the cytoplasm. It catalyses the reaction ATP + H2O + a folded polypeptide = ADP + phosphate + an unfolded polypeptide.. In terms of biological role, together with its co-chaperonin GroES, plays an essential role in assisting protein folding. The GroEL-GroES system forms a nano-cage that allows encapsulation of the non-native substrate proteins and provides a physical environment optimized to promote and accelerate protein folding. This is Chaperonin GroEL from Dechloromonas aromatica (strain RCB).